The primary structure comprises 306 residues: UDP-N-acetylenolpyruvoylglucosamine reductase (306 aa).

The FAD-binding PCMH-type domain occupies 33-197 (TGGEADFYLS…LEAAFTLEPG (165 aa)). The active site involves Arg-176. Ser-226 acts as the Proton donor in catalysis. The active site involves Glu-296.

The protein belongs to the MurB family. It depends on FAD as a cofactor.

It localises to the cytoplasm. The catalysed reaction is UDP-N-acetyl-alpha-D-muramate + NADP(+) = UDP-N-acetyl-3-O-(1-carboxyvinyl)-alpha-D-glucosamine + NADPH + H(+). It functions in the pathway cell wall biogenesis; peptidoglycan biosynthesis. Cell wall formation. The chain is UDP-N-acetylenolpyruvoylglucosamine reductase from Staphylococcus epidermidis (strain ATCC 35984 / DSM 28319 / BCRC 17069 / CCUG 31568 / BM 3577 / RP62A).